The following is a 477-amino-acid chain: Ribulose bisphosphate carboxylase large chain (477 aa).

Residues 1-2 constitute a propeptide that is removed on maturation; sequence MS. Position 3 is an N-acetylproline (Pro3). Lys14 bears the N6,N6,N6-trimethyllysine mark. Residues Asn123 and Thr173 each coordinate substrate. Lys175 functions as the Proton acceptor in the catalytic mechanism. Lys177 serves as a coordination point for substrate. The Mg(2+) site is built by Lys201, Asp203, and Glu204. An N6-carboxylysine modification is found at Lys201. The active-site Proton acceptor is His294. Substrate-binding residues include Arg295, His327, and Ser379.

Belongs to the RuBisCO large chain family. Type I subfamily. Heterohexadecamer of 8 large chains and 8 small chains; disulfide-linked. The disulfide link is formed within the large subunit homodimers. Requires Mg(2+) as cofactor. The disulfide bond which can form in the large chain dimeric partners within the hexadecamer appears to be associated with oxidative stress and protein turnover.

The protein resides in the plastid. It catalyses the reaction 2 (2R)-3-phosphoglycerate + 2 H(+) = D-ribulose 1,5-bisphosphate + CO2 + H2O. The catalysed reaction is D-ribulose 1,5-bisphosphate + O2 = 2-phosphoglycolate + (2R)-3-phosphoglycerate + 2 H(+). In terms of biological role, ruBisCO catalyzes two reactions: the carboxylation of D-ribulose 1,5-bisphosphate, the primary event in carbon dioxide fixation, as well as the oxidative fragmentation of the pentose substrate in the photorespiration process. Both reactions occur simultaneously and in competition at the same active site. The chain is Ribulose bisphosphate carboxylase large chain (rbcL) from Lathraea clandestina (Purple toothwort).